The following is a 582-amino-acid chain: Sodium-dependent low-affinity dicarboxylate transporter 1 (582 aa).

The next 12 helical transmembrane spans lie at 17–37, 59–79, 87–107, 130–150, 224–244, 271–291, 317–337, 353–373, 401–421, 455–475, 482–502, and 527–547; these read SFVI…VGDS, ALPL…FGIM, AYLP…LAVE, VMAG…NTAT, LMLS…TGTA, IFAF…LYLL, FSFA…LWIL, EFVS…TLPE, FPWS…GVKE, TNVC…AELA, PLNF…LPVA, and VTLG…GFVF.

It belongs to the SLC13A/DASS transporter (TC 2.A.47) family. NADC subfamily. In terms of tissue distribution, nad-1 and nad-2 are coexpressed in the intestinal tract from early larvae to adults, expression is from the pharynx through to the anus. Expression level is significantly greater in the anterior half of the intestine than in the posterior half.

The protein localises to the membrane. In terms of biological role, low affinity sodium-dicarboxylate cotransporter that accepts a range of tricarboxylic acid-cycle intermediates with 4-5 carbon atoms. There is no interaction with monocarboxylates. The sequence is that of Sodium-dependent low-affinity dicarboxylate transporter 1 (nac-1) from Caenorhabditis elegans.